The primary structure comprises 305 residues: Oxygen-dependent coproporphyrinogen-III oxidase (305 aa).

Position 93 (Ser93) interacts with substrate. Residues His97 and His107 each contribute to the a divalent metal cation site. Catalysis depends on His107, which acts as the Proton donor. 109-111 contributes to the substrate binding site; it reads NVR. The a divalent metal cation site is built by His146 and His176. The segment at 241 to 276 is important for dimerization; sequence YVEFNLVFDRGTLFGLQSGGRTESILMSLPPQVRWG. Residue 259–261 participates in substrate binding; it reads GGR.

Belongs to the aerobic coproporphyrinogen-III oxidase family. In terms of assembly, homodimer. A divalent metal cation is required as a cofactor.

The protein resides in the cytoplasm. The catalysed reaction is coproporphyrinogen III + O2 + 2 H(+) = protoporphyrinogen IX + 2 CO2 + 2 H2O. The protein operates within porphyrin-containing compound metabolism; protoporphyrin-IX biosynthesis; protoporphyrinogen-IX from coproporphyrinogen-III (O2 route): step 1/1. Its function is as follows. Involved in the heme biosynthesis. Catalyzes the aerobic oxidative decarboxylation of propionate groups of rings A and B of coproporphyrinogen-III to yield the vinyl groups in protoporphyrinogen-IX. In Pseudomonas paraeruginosa (strain DSM 24068 / PA7) (Pseudomonas aeruginosa (strain PA7)), this protein is Oxygen-dependent coproporphyrinogen-III oxidase.